The primary structure comprises 329 residues: uncharacterized protein (329 aa).

Residues 284-303 are disordered; it reads SGGGHSEAGGLNAPYDKSKS.

This is an uncharacterized protein from Methanocaldococcus jannaschii (strain ATCC 43067 / DSM 2661 / JAL-1 / JCM 10045 / NBRC 100440) (Methanococcus jannaschii).